The sequence spans 147 residues: Hemoglobin subunit epsilon (147 aa).

A Globin domain is found at 3-147 (HFTAEEKSVI…VATALAHKYH (145 aa)). A Phosphoserine modification is found at S51. Heme b-binding residues include H64 and H93.

This sequence belongs to the globin family. As to expression, red blood cells.

Functionally, hemoglobin epsilon chain is a beta-type chain found in early embryos. This is Hemoglobin subunit epsilon (HBE1) from Sus scrofa (Pig).